Consider the following 669-residue polypeptide: DNA mismatch repair protein MutL (669 aa).

Residues 361-409 (ENVFSQPYQAPVTSSTQKKSTGAYQGSAGKGLTDTQKSPQKTLDTRQFG) are disordered. Composition is skewed to polar residues over residues 363 to 384 (VFSQPYQAPVTSSTQKKSTGAY) and 393 to 402 (TDTQKSPQKT).

This sequence belongs to the DNA mismatch repair MutL/HexB family.

This protein is involved in the repair of mismatches in DNA. It is required for dam-dependent methyl-directed DNA mismatch repair. May act as a 'molecular matchmaker', a protein that promotes the formation of a stable complex between two or more DNA-binding proteins in an ATP-dependent manner without itself being part of a final effector complex. This is DNA mismatch repair protein MutL from Proteus mirabilis (strain HI4320).